We begin with the raw amino-acid sequence, 175 residues long: MNLDFIKSKIAAVPDFPKPGIMFRDITPLLADPQGLRKTAEAMAQELKNKGIQPTIVAGTESRGFIFGVALAEVLGLGFVPVRKPGKLPRATYSVKYDLEYGSDSLEIHQDAFKVTDEVLVVDDLLATGGTAKATVDLIEKTQAKVAGLIFVMELDGLGGREVLAGYNVSALIKF.

This sequence belongs to the purine/pyrimidine phosphoribosyltransferase family. Homodimer.

The protein resides in the cytoplasm. The enzyme catalyses AMP + diphosphate = 5-phospho-alpha-D-ribose 1-diphosphate + adenine. It functions in the pathway purine metabolism; AMP biosynthesis via salvage pathway; AMP from adenine: step 1/1. Its function is as follows. Catalyzes a salvage reaction resulting in the formation of AMP, that is energically less costly than de novo synthesis. The polypeptide is Adenine phosphoribosyltransferase (Francisella tularensis subsp. tularensis (strain FSC 198)).